Reading from the N-terminus, the 199-residue chain is Glycerol-3-phosphate acyltransferase (199 aa).

Helical transmembrane passes span 3 to 23 (AAVW…GVLV), 50 to 70 (WGPA…AVLV), 78 to 98 (DWML…SVFL), 113 to 133 (LLFL…SVIL), and 154 to 174 (LALG…LLIF).

The protein belongs to the PlsY family. As to quaternary structure, probably interacts with PlsX.

The protein resides in the cell inner membrane. The catalysed reaction is an acyl phosphate + sn-glycerol 3-phosphate = a 1-acyl-sn-glycero-3-phosphate + phosphate. Its pathway is lipid metabolism; phospholipid metabolism. Its function is as follows. Catalyzes the transfer of an acyl group from acyl-phosphate (acyl-PO(4)) to glycerol-3-phosphate (G3P) to form lysophosphatidic acid (LPA). This enzyme utilizes acyl-phosphate as fatty acyl donor, but not acyl-CoA or acyl-ACP. The protein is Glycerol-3-phosphate acyltransferase of Thermus thermophilus (strain ATCC 27634 / DSM 579 / HB8).